Reading from the N-terminus, the 721-residue chain is Choline O-acetyltransferase (721 aa).

The active-site Proton acceptor is the histidine 419. Residues glycine 496 to aspartate 508, serine 534, and glutamine 656 contribute to the CoA site.

This sequence belongs to the carnitine/choline acetyltransferase family. The 54 kDa and 13 kDa chains exist as a heterodimer. In terms of processing, the N-terminus of choline O-acetyltransferase 67 kDa and 54 kDa chains are blocked.

It carries out the reaction choline + acetyl-CoA = acetylcholine + CoA. Its function is as follows. Catalyzes the reversible synthesis of acetylcholine (ACh) from acetyl CoA and choline at cholinergic synapses. This Drosophila melanogaster (Fruit fly) protein is Choline O-acetyltransferase.